The sequence spans 487 residues: UDP-N-acetylmuramate--L-alanine ligase (487 aa).

130-136 (GTHGKTT) serves as a coordination point for ATP.

The protein belongs to the MurCDEF family.

It is found in the cytoplasm. The enzyme catalyses UDP-N-acetyl-alpha-D-muramate + L-alanine + ATP = UDP-N-acetyl-alpha-D-muramoyl-L-alanine + ADP + phosphate + H(+). It participates in cell wall biogenesis; peptidoglycan biosynthesis. Its function is as follows. Cell wall formation. In Photobacterium profundum (strain SS9), this protein is UDP-N-acetylmuramate--L-alanine ligase.